Reading from the N-terminus, the 232-residue chain is Thiamine import ATP-binding protein ThiQ (232 aa).

The ABC transporter domain maps to 2-230; sequence LKLTDITWLY…KGSASAIWGI (229 aa). ATP is bound at residue 32–39; sequence GPSGAGKS.

This sequence belongs to the ABC transporter superfamily. Thiamine importer (TC 3.A.1.19.1) family. As to quaternary structure, the complex is composed of two ATP-binding proteins (ThiQ), two transmembrane proteins (ThiP) and a solute-binding protein (ThiB).

The protein localises to the cell inner membrane. It carries out the reaction thiamine(out) + ATP + H2O = thiamine(in) + ADP + phosphate + H(+). In terms of biological role, part of the ABC transporter complex ThiBPQ involved in thiamine import. Responsible for energy coupling to the transport system. This Shigella flexneri protein is Thiamine import ATP-binding protein ThiQ.